We begin with the raw amino-acid sequence, 233 residues long: Large ribosomal subunit protein uL1 (233 aa).

Belongs to the universal ribosomal protein uL1 family. As to quaternary structure, part of the 50S ribosomal subunit.

Binds directly to 23S rRNA. The L1 stalk is quite mobile in the ribosome, and is involved in E site tRNA release. Functionally, protein L1 is also a translational repressor protein, it controls the translation of the L11 operon by binding to its mRNA. The protein is Large ribosomal subunit protein uL1 of Geobacillus sp. (strain WCH70).